The following is a 512-amino-acid chain: Glutathione-binding protein GsiB (512 aa).

Residues 1–26 form the signal peptide; sequence MTQFITHKWLAALGLASSIAAFPALA.

It belongs to the bacterial solute-binding protein 5 family. In terms of assembly, the complex is composed of two ATP-binding proteins (GsiA), two transmembrane proteins (GsiC and GsiD) and a solute-binding protein (GsiB).

It is found in the periplasm. Its function is as follows. Part of the ABC transporter complex GsiABCD involved in glutathione import. Binds glutathione. This Salmonella paratyphi A (strain ATCC 9150 / SARB42) protein is Glutathione-binding protein GsiB.